A 66-amino-acid chain; its full sequence is DNA gyrase inhibitor YacG (66 aa).

Positions 9, 12, 28, and 32 each coordinate Zn(2+).

This sequence belongs to the DNA gyrase inhibitor YacG family. Interacts with GyrB. It depends on Zn(2+) as a cofactor.

Inhibits all the catalytic activities of DNA gyrase by preventing its interaction with DNA. Acts by binding directly to the C-terminal domain of GyrB, which probably disrupts DNA binding by the gyrase. This chain is DNA gyrase inhibitor YacG, found in Pseudomonas fluorescens (strain SBW25).